The following is a 254-amino-acid chain: Flavin-dependent thymidylate synthase (254 aa).

The region spanning 7–237 is the ThyX domain; sequence LRVQLIARTE…PAVFADFEIY (231 aa). FAD contacts are provided by residues serine 71, 95–97, and glutamine 103; that span reads RHR. DUMP contacts are provided by residues 92–95, 103–107, and arginine 176; these read ELIR and QLSQR. The ThyX motif signature appears at 95–105; the sequence is RHRHFSYSQLS. FAD-binding positions include 192–194 and histidine 198; that span reads NYR. Residue arginine 203 coordinates dUMP. Residue arginine 203 is the Involved in ionization of N3 of dUMP, leading to its activation of the active site.

The protein belongs to the thymidylate synthase ThyX family. In terms of assembly, homotetramer. FAD is required as a cofactor.

The enzyme catalyses dUMP + (6R)-5,10-methylene-5,6,7,8-tetrahydrofolate + NADPH + H(+) = dTMP + (6S)-5,6,7,8-tetrahydrofolate + NADP(+). The protein operates within pyrimidine metabolism; dTTP biosynthesis. Functionally, catalyzes the reductive methylation of 2'-deoxyuridine-5'-monophosphate (dUMP) to 2'-deoxythymidine-5'-monophosphate (dTMP) while utilizing 5,10-methylenetetrahydrofolate (mTHF) as the methyl donor, and NADPH and FADH(2) as the reductant. The chain is Flavin-dependent thymidylate synthase from Mycobacterium sp. (strain KMS).